The sequence spans 90 residues: DNA-directed RNA polymerase subunit omega (90 aa).

Residues 69 to 90 (RQEQQEQEAAELAAVSSIAHTR) are disordered.

This sequence belongs to the RNA polymerase subunit omega family. In terms of assembly, the RNAP catalytic core consists of 2 alpha, 1 beta, 1 beta' and 1 omega subunit. When a sigma factor is associated with the core the holoenzyme is formed, which can initiate transcription.

The catalysed reaction is RNA(n) + a ribonucleoside 5'-triphosphate = RNA(n+1) + diphosphate. Promotes RNA polymerase assembly. Latches the N- and C-terminal regions of the beta' subunit thereby facilitating its interaction with the beta and alpha subunits. The sequence is that of DNA-directed RNA polymerase subunit omega from Vibrio atlanticus (strain LGP32) (Vibrio splendidus (strain Mel32)).